We begin with the raw amino-acid sequence, 456 residues long: Sulfate adenylyltransferase (456 aa).

Belongs to the sulfate adenylyltransferase family.

The catalysed reaction is sulfate + ATP + H(+) = adenosine 5'-phosphosulfate + diphosphate. It functions in the pathway sulfur metabolism; hydrogen sulfide biosynthesis; sulfite from sulfate: step 1/3. The chain is Sulfate adenylyltransferase (sat) from Archaeoglobus fulgidus (strain ATCC 49558 / DSM 4304 / JCM 9628 / NBRC 100126 / VC-16).